The chain runs to 116 residues: Hydrogenase maturation factor HypA (116 aa).

Histidine 2 provides a ligand contact to Ni(2+). Zn(2+)-binding residues include cysteine 73, cysteine 76, cysteine 90, and cysteine 93.

It belongs to the HypA/HybF family.

In terms of biological role, involved in the maturation of [NiFe] hydrogenases. Required for nickel insertion into the metal center of the hydrogenase. In Escherichia coli O6:H1 (strain CFT073 / ATCC 700928 / UPEC), this protein is Hydrogenase maturation factor HypA.